Consider the following 170-residue polypeptide: Flavodoxin (170 aa).

The Flavodoxin-like domain maps to 4-165 (IGLFYGTQTG…RVKTWVSEIK (162 aa)).

This sequence belongs to the flavodoxin family. FMN is required as a cofactor.

Its function is as follows. Low-potential electron donor to a number of redox enzymes. The sequence is that of Flavodoxin (isiB) from Synechocystis sp. (strain ATCC 27184 / PCC 6803 / Kazusa).